The following is a 333-amino-acid chain: Nucleoid-associated protein APJL_0454 (333 aa).

The protein belongs to the YejK family.

It localises to the cytoplasm. The protein resides in the nucleoid. The protein is Nucleoid-associated protein APJL_0454 of Actinobacillus pleuropneumoniae serotype 3 (strain JL03).